The sequence spans 123 residues: Protein crumbs homolog 3 (123 aa).

The N-terminal stretch at 1 to 26 (MASPGLGLLLALGLPLLPARWGRAWG) is a signal peptide. Residues 27-59 (QTLDPHVNENGTITPSAPGSGSNGALSQEAITA) are Extracellular-facing. Asn-36 carries an N-linked (GlcNAc...) asparagine glycan. The helical transmembrane segment at 60 to 80 (IIVVFSLLAAVLLAVGLVLLL) threads the bilayer. Topologically, residues 81–120 (RKLREKRQTQGTYRPSSEEQFNHAAEARAPQDSKETVRGC) are cytoplasmic. Positions 87-123 (RQTQGTYRPSSEEQFNHAAEARAPQDSKETVRGCLPI) are disordered. Residues 96–117 (SSEEQFNHAAEARAPQDSKETV) are compositionally biased toward basic and acidic residues. Residues 119-123 (GCLPI) carry the PDZ-binding motif.

In terms of assembly, component of a complex composed of CRB3, PALS1 and PATJ. Interacts (via C-terminus) with PALS1 (via PDZ domain). Interacts with PARD6A. Interacts (via intracellular domain) with EPB41L5. Interacts with WDR83.

The protein resides in the apical cell membrane. Its subcellular location is the cell junction. The protein localises to the tight junction. In terms of biological role, involved in the establishment of cell polarity in mammalian epithelial cells. Regulates the morphogenesis of tight junctions. Involved in promoting phosphorylation and cytoplasmic retention of transcriptional coactivators YAP1 and WWTR1/TAZ which leads to suppression of TGFB1-dependent transcription of target genes such as CCN2/CTGF, SERPINE1/PAI1, SNAI1/SNAIL1 and SMAD7. This chain is Protein crumbs homolog 3, found in Canis lupus familiaris (Dog).